Reading from the N-terminus, the 561-residue chain is Putative cysteine ligase BshC (561 aa).

Positions 472–517 form a coiled coil; sequence LAQSVEKVMQSTLNQVENLKSKTIKAEKQRHNDLIAQIEKSRDNLL.

It belongs to the BshC family.

The polypeptide is Putative cysteine ligase BshC (Chloroherpeton thalassium (strain ATCC 35110 / GB-78)).